Here is a 377-residue protein sequence, read N- to C-terminus: UDP-N-acetylenolpyruvoylglucosamine reductase (377 aa).

Positions 48 to 215 (LGGTPMAAVR…LGITLQLHTD (168 aa)) constitute an FAD-binding PCMH-type domain. Arg-193 is an active-site residue. Residue Ser-268 is the Proton donor of the active site. Glu-369 is a catalytic residue.

It belongs to the MurB family. Requires FAD as cofactor.

The protein resides in the cytoplasm. It carries out the reaction UDP-N-acetyl-alpha-D-muramate + NADP(+) = UDP-N-acetyl-3-O-(1-carboxyvinyl)-alpha-D-glucosamine + NADPH + H(+). The protein operates within cell wall biogenesis; peptidoglycan biosynthesis. Cell wall formation. The chain is UDP-N-acetylenolpyruvoylglucosamine reductase from Corynebacterium diphtheriae (strain ATCC 700971 / NCTC 13129 / Biotype gravis).